Consider the following 477-residue polypeptide: MSSAEDGELDPQIQIELENLNSATDEINKLEIELEEANSTFRILLNESTRRLKVSSKKLGNCIEKARPYYEALDKAREAQIECQKAAVKFQRANEIHAAAKETVALAEQRFMSNSHEWQFDNAWQEMLNHATQKVMDAETQKADCHAEHQRLTKLFNAAEQKLQQLEDRFRRSINKSRPYFEEKQVCQDQLQTQKNRIQELQQQVAGAKSTYSTALRNLERISEDIHRQRGDFPTPPGPREPGVGAELNSPTSSALPSLPDFQLELEKCDYPSIAGSQMSLGAKTPQAAAETEDEEDACDYDETGAGELRGVVDERDLEALRQKVKILAVRPIEGGDGQQQNDVWEHELKATVDKLDHLMMLKETAKRQQTNRLKSTEQRPDSLGAEALKRHCDVVEVKVTSCATTASLPVTPHHQLNHLAPPTPIKKLQQQLAPLPSVNVSMRELPLLARLSNELLDRSSAAFGGVRKTLRRRSLE.

Residues 12 to 95 (QIQIELENLN…AAVKFQRANE (84 aa)) are a coiled coil. S113 and S115 each carry phosphoserine. Residues 122–221 (NAWQEMLNHA…YSTALRNLER (100 aa)) adopt a coiled-coil conformation. Disordered regions lie at residues 224–258 (EDIHRQRGDFPTPPGPREPGVGAELNSPTSSALPS) and 276–306 (GSQMSLGAKTPQAAAETEDEEDACDYDETGA). The segment covering 291–305 (ETEDEEDACDYDETG) has biased composition (acidic residues).

Belongs to the SH3BP5 family.

In Drosophila melanogaster (Fruit fly), this protein is SH3 domain-binding protein 5 homolog (pcs).